An 859-amino-acid polypeptide reads, in one-letter code: Probable helicase A859L (859 aa).

Residues 178–349 form the Helicase ATP-binding domain; it reads YQELQRSGRA…KNRDLFGGVA (172 aa). 191–198 is an ATP binding site; the sequence is MACRCGKT. Positions 298-301 match the DEAH box motif; that stretch reads DECH. Residues 394-553 enclose the Helicase C-terminal domain; it reads QIIMALAYLK…RFYEHLLNPS (160 aa).

Belongs to the asfivirus helicase A859L family.

The sequence is that of Probable helicase A859L from Ornithodoros (relapsing fever ticks).